Reading from the N-terminus, the 378-residue chain is tRNA (guanine(26)-N(2))-dimethyltransferase (378 aa).

Residues 4–374 enclose the Trm1 methyltransferase domain; that stretch reads KEVTEGKVRI…KGYEEIIRCV (371 aa). 5 residues coordinate S-adenosyl-L-methionine: R44, R69, D87, D114, and A115. Zn(2+) is bound by residues C246, C249, C263, and C266.

Belongs to the class I-like SAM-binding methyltransferase superfamily. Trm1 family.

The enzyme catalyses guanosine(26) in tRNA + 2 S-adenosyl-L-methionine = N(2)-dimethylguanosine(26) in tRNA + 2 S-adenosyl-L-homocysteine + 2 H(+). Its function is as follows. Dimethylates a single guanine residue at position 26 of a number of tRNAs using S-adenosyl-L-methionine as donor of the methyl groups. The protein is tRNA (guanine(26)-N(2))-dimethyltransferase of Saccharolobus islandicus (strain M.14.25 / Kamchatka #1) (Sulfolobus islandicus).